The primary structure comprises 877 residues: Protein SEY1 homolog (877 aa).

Topologically, residues 1-735 (MVAFAGGART…LRSIEGEKQN (735 aa)) are cytoplasmic. The 259-residue stretch at 49-307 (GITYHVVGVL…VPLDGIPSYL (259 aa)) folds into the GB1/RHD3-type G domain. 59 to 66 (GGQSSGKS) contributes to the GTP binding site. Residues 388–410 (RIDIVRKTEAELEEELLKVELKL) are a coiled coil. The helical transmembrane segment at 736–756 (LPAWVLPVLLLLGWNEIWYVL) threads the bilayer. Residues 757 to 759 (SSP) lie on the Lumenal side of the membrane. The chain crosses the membrane as a helical span at residues 760–780 (VLLVVVVIIAAVFLRGFLLTQ). Residues 781-877 (WAIFEETGPT…KEEEVPTQKE (97 aa)) are Cytoplasmic-facing. The disordered stretch occupies residues 850–877 (PTVLPPSTTSATLTRRLKKEEEVPTQKE). Residues 867-877 (KKEEEVPTQKE) are compositionally biased toward basic and acidic residues.

The protein belongs to the TRAFAC class dynamin-like GTPase superfamily. GB1/RHD3 GTPase family. RHD3 subfamily.

It is found in the endoplasmic reticulum membrane. Its function is as follows. Probable GTP-binding protein that may be involved in cell development. This is Protein SEY1 homolog from Trypanosoma cruzi (strain CL Brener).